Reading from the N-terminus, the 79-residue chain is MELEAMSRYTSPVNPAVFPHLTVVLLAIGMFFTAWFFVYEVTSTKYTRDVYKELLISLVASLFMGFGVLFLLLWVGIYV.

Transmembrane regions (helical) follow at residues 17 to 37 (VFPH…AWFF) and 55 to 75 (LISL…LLWV).

Belongs to the OST5 family. In terms of assembly, component of the oligosaccharyltransferase (OST) complex.

The protein localises to the membrane. Its subcellular location is the endoplasmic reticulum. It localises to the cytoplasm. The protein operates within protein modification; protein glycosylation. Its function is as follows. Subunit of the oligosaccharyl transferase (OST) complex that catalyzes the initial transfer of a defined glycan (Glc(3)Man(9)GlcNAc(2) in eukaryotes) from the lipid carrier dolichol-pyrophosphate to an asparagine residue within an Asn-X-Ser/Thr consensus motif in nascent polypeptide chains, the first step in protein N-glycosylation. N-glycosylation occurs cotranslationally and the complex associates with the Sec61 complex at the channel-forming translocon complex that mediates protein translocation across the endoplasmic reticulum (ER). All subunits are required for a maximal enzyme activity. The protein is Dolichyl-diphosphooligosaccharide--protein glycosyltransferase subunit TMEM258 of Xenopus laevis (African clawed frog).